We begin with the raw amino-acid sequence, 197 residues long: ATP-dependent Clp protease proteolytic subunit 2 (197 aa).

The active-site Nucleophile is the Ser97. Residue His122 is part of the active site.

It belongs to the peptidase S14 family. Fourteen ClpP subunits assemble into 2 heptameric rings which stack back to back to give a disk-like structure with a central cavity, resembling the structure of eukaryotic proteasomes.

The protein resides in the cytoplasm. The enzyme catalyses Hydrolysis of proteins to small peptides in the presence of ATP and magnesium. alpha-casein is the usual test substrate. In the absence of ATP, only oligopeptides shorter than five residues are hydrolyzed (such as succinyl-Leu-Tyr-|-NHMec, and Leu-Tyr-Leu-|-Tyr-Trp, in which cleavage of the -Tyr-|-Leu- and -Tyr-|-Trp bonds also occurs).. Its function is as follows. Cleaves peptides in various proteins in a process that requires ATP hydrolysis. Has a chymotrypsin-like activity. Plays a major role in the degradation of misfolded proteins. The sequence is that of ATP-dependent Clp protease proteolytic subunit 2 from Leptospira interrogans serogroup Icterohaemorrhagiae serovar copenhageni (strain Fiocruz L1-130).